Reading from the N-terminus, the 1486-residue chain is Chromosome partition protein MukB (1486 aa).

34–41 serves as a coordination point for ATP; that stretch reads GGNGAGKS. Coiled coils occupy residues 326-418, 444-480, and 509-603; these read LEAD…QYNQ, LETF…QAYQ, and RHLA…RAPV. A flexible hinge region spans residues 666-783; sequence PGGSEDQRLN…EVPLFGRAAR (118 aa). 3 coiled-coil regions span residues 835–923, 977–1115, and 1209–1266; these read EAEI…AKLE, EMLS…TAKA, and VEAI…QNVS.

This sequence belongs to the SMC family. MukB subfamily. Homodimerization via its hinge domain. Binds to DNA via its C-terminal region. Interacts, and probably forms a ternary complex, with MukE and MukF via its C-terminal region. The complex formation is stimulated by calcium or magnesium. Interacts with tubulin-related protein FtsZ.

The protein localises to the cytoplasm. Its subcellular location is the nucleoid. Its function is as follows. Plays a central role in chromosome condensation, segregation and cell cycle progression. Functions as a homodimer, which is essential for chromosome partition. Involved in negative DNA supercoiling in vivo, and by this means organize and compact chromosomes. May achieve or facilitate chromosome segregation by condensation DNA from both sides of a centrally located replisome during cell division. This Escherichia coli (strain SMS-3-5 / SECEC) protein is Chromosome partition protein MukB.